A 693-amino-acid polypeptide reads, in one-letter code: Polyribonucleotide nucleotidyltransferase (693 aa).

Mg(2+) is bound by residues aspartate 486 and aspartate 492. The KH domain maps to 553–612 (PRIHTIKINPEKIKDVIGKGGSVIRMLTEETGTTIEIEDDGTVKISAVMQEKAKCAIQRI). The S1 motif domain maps to 622–690 (GSVYTGKVTR…RQGRLRLSIK (69 aa)).

The protein belongs to the polyribonucleotide nucleotidyltransferase family. As to quaternary structure, component of the RNA degradosome, which is a multiprotein complex involved in RNA processing and mRNA degradation. Mg(2+) is required as a cofactor.

The protein resides in the cytoplasm. The enzyme catalyses RNA(n+1) + phosphate = RNA(n) + a ribonucleoside 5'-diphosphate. In terms of biological role, involved in mRNA degradation. Catalyzes the phosphorolysis of single-stranded polyribonucleotides processively in the 3'- to 5'-direction. The polypeptide is Polyribonucleotide nucleotidyltransferase (Buchnera aphidicola subsp. Baizongia pistaciae (strain Bp)).